A 611-amino-acid polypeptide reads, in one-letter code: Protein ral2 (611 aa).

3 Kelch repeats span residues 43–91 (EAFV…HSGD), 96–149 (KLIF…EVNG), and 175–224 (YLII…VINK). Ser604 bears the Phosphoserine mark.

Essential for mating and for recognition of the mating pheromone, and for the determination of cell shape. Implicated in activation of the ras1 protein. This Schizosaccharomyces pombe (strain 972 / ATCC 24843) (Fission yeast) protein is Protein ral2 (ral2).